The primary structure comprises 81 residues: Apolipoprotein C-I, acidic form (81 aa).

Positions 1 to 24 (MRLFLSLLVVVLSMVLKGPTPAQG) are cleaved as a signal peptide.

This sequence belongs to the apolipoprotein C1 family.

The protein localises to the secreted. The protein is Apolipoprotein C-I, acidic form (APOC1A) of Macaca fascicularis (Crab-eating macaque).